A 180-amino-acid chain; its full sequence is Large ribosomal subunit protein mL41 (180 aa).

A mitochondrion-targeting transit peptide spans 1 to 21 (MKLVLVSTRGVRSLNSTNFPA).

This sequence belongs to the mitochondrion-specific ribosomal protein mL41 family. In terms of assembly, component of the mitochondrial ribosome large subunit (39S) which comprises a 16S rRNA and about 50 distinct proteins.

It localises to the mitochondrion. This chain is Large ribosomal subunit protein mL41 (mrpl-41), found in Caenorhabditis elegans.